Here is a 282-residue protein sequence, read N- to C-terminus: BTB/POZ domain-containing protein At3g56230 (282 aa).

Residues 40 to 50 (GSKEDRHDKSN) show a composition bias toward basic and acidic residues. Residues 40–66 (GSKEDRHDKSNHNSTINNGSSISSSPL) are disordered. Positions 51 to 64 (HNSTINNGSSISSS) are enriched in low complexity. The BTB domain maps to 111 to 181 (ADILLKPGDD…LYTGTLASDK (71 aa)).

Its pathway is protein modification; protein ubiquitination. May act as a substrate-specific adapter of an E3 ubiquitin-protein ligase complex (CUL3-RBX1-BTB) which mediates the ubiquitination and subsequent proteasomal degradation of target proteins. This is BTB/POZ domain-containing protein At3g56230 from Arabidopsis thaliana (Mouse-ear cress).